A 507-amino-acid polypeptide reads, in one-letter code: ATP synthase subunit alpha, chloroplastic (507 aa).

ATP is bound at residue 170 to 177; that stretch reads GDRQTGKT. Position 257 is a phosphothreonine (Thr257).

The protein belongs to the ATPase alpha/beta chains family. F-type ATPases have 2 components, CF(1) - the catalytic core - and CF(0) - the membrane proton channel. CF(1) has five subunits: alpha(3), beta(3), gamma(1), delta(1), epsilon(1). CF(0) has four main subunits: a, b, b' and c.

The protein localises to the plastid. The protein resides in the chloroplast thylakoid membrane. The enzyme catalyses ATP + H2O + 4 H(+)(in) = ADP + phosphate + 5 H(+)(out). In terms of biological role, produces ATP from ADP in the presence of a proton gradient across the membrane. The alpha chain is a regulatory subunit. This chain is ATP synthase subunit alpha, chloroplastic, found in Capsella bursa-pastoris (Shepherd's purse).